The chain runs to 455 residues: SUN domain-containing protein 2 (455 aa).

Positions 1 to 12 (MSASTVSITASP) are enriched in polar residues. Positions 1 to 99 (MSASTVSITA…RTRKSQGNKI (99 aa)) are disordered. The residue at position 2 (S2) is an N-acetylserine. At 2-105 (SASTVSITAS…GNKIDRGKWK (104 aa)) the chain is on the nuclear side. Phosphoserine is present on S63. A compositionally biased stretch (low complexity) spans 74 to 88 (KSGSTATGTNTTTTQ). The Nuclear localization signal signature appears at 88-95 (QRRTRKSQ). A helical transmembrane segment spans residues 106–128 (TVVRVFAKQFGALLLLVGLIQLI). Residues 129–455 (RKLTLKDSSL…ELDSVSVAHA (327 aa)) lie on the Perinuclear space side of the membrane. Positions 201-225 (LHSELKKVESKTERLQVSVDELNAK) form a coiled coil. Residues 285 to 447 (GGAFVMGHSD…YRFRVHGREL (163 aa)) enclose the SUN domain.

Forms homomers (e.g. dimers, trimers and tetramers) and heteromers with SUN1. Interacts with SUN3, SUN4 and TIK. Core component of the LINC complex which is composed of inner nuclear membrane SUN domain-containing proteins coupled to outer nuclear membrane WIP and WIT proteins. The LINC complex also involves nucleoskeletal proteins CRWN/LINC and possibly KAKU4 and the cytoskeletal myosin KAKU1. Interacts with LINC1, WIP1, WIP2 and WIP3 at the nuclear envelope (NE). Interacts with SINE1, SINE2, SINE3 and SINE4. Interacts with NEAP1, NEA2 and NEAP3. As to expression, expressed in roots, hypocotyls, cotyledons and leaves and inflorescences.

The protein localises to the nucleus inner membrane. The protein resides in the cytoplasm. It is found in the cytoskeleton. Its subcellular location is the phragmoplast. It localises to the endoplasmic reticulum membrane. The protein localises to the nucleus envelope. Component of SUN-protein-containing multivariate complexes also called LINC complexes which link the nucleoskeleton and cytoskeleton by providing versatile outer nuclear membrane attachment sites for cytoskeletal filaments. Required for the maintenance and/or formation of polarized nuclear shape in root hairs. Modulates the anchoring and mobility of WIP proteins in the nuclear envelope (NE). In association with SUN1, may be involved in telomere attachment to nuclear envelope in the prophase of meiosis. As component of the SUN-WIP-WIT2-KAKU1 complex, mediates the transfer of cytoplasmic forces to the nuclear envelope (NE), leading to nuclear shape changes. The polypeptide is SUN domain-containing protein 2 (Arabidopsis thaliana (Mouse-ear cress)).